Here is a 106-residue protein sequence, read N- to C-terminus: MHCDIYKFPKRSEMYVYIARPDYPNDTDEIKDWLGVLPKDLRQSLGEPKFLMHLDLAETKKLARVNKDDVIEKLQSQGYFVQTPPSDVLLAQAQARMKEGQDKRYD.

The YcgL domain maps to 1–94 (MHCDIYKFPK…PSDVLLAQAQ (94 aa)).

The polypeptide is YcgL domain-containing protein PsycPRwf_1721 (Psychrobacter sp. (strain PRwf-1)).